The sequence spans 183 residues: MDIDPYKEFGASVELLSFLPSDFFPSVRDLLDTASALYREALESPEHCSPNHTALRQAVLCWGELMTGCSWVGNNLEDPASRELVVNYVNTNMGLKIRQLLWFHISCLTFGRETVLEYLVSFGVWIRTPPAYRPPNAPILSTLPETTVVRRRGRSPRRRTPSPRRRRSQSPRRRRSQSPASQC.

The tract at residues 136-183 is disordered; that stretch reads NAPILSTLPETTVVRRRGRSPRRRTPSPRRRRSQSPRRRRSQSPASQC. Residues 149–176 show a composition bias toward basic residues; that stretch reads VRRRGRSPRRRTPSPRRRRSQSPRRRRS. 3 positions are modified to phosphoserine; by host: Ser155, Ser162, and Ser170. A 1; half-length repeat occupies 155-161; sequence SPRRRTP. The tract at residues 155 to 177 is 3 X 8 AA repeats of S-P-R-R-R-[PR]-S-Q; the sequence is SPRRRTPSPRRRRSQSPRRRRSQ. Positions 158-175 match the Bipartite nuclear localization signal motif; it reads RRTPSPRRRRSQSPRRRR. Repeat copies occupy residues 162–169 and 170–177. Residues 177-183 are RNA binding; that stretch reads QSPASQC.

This sequence belongs to the orthohepadnavirus core antigen family. Homodimerizes, then multimerizes. Interacts with cytosol exposed regions of viral L glycoprotein present in the reticulum-to-Golgi compartment. Interacts with human FLNB. Phosphorylated form interacts with host importin alpha; this interaction depends on the exposure of the NLS, which itself depends upon genome maturation and/or phosphorylation of the capsid protein. Interacts with host NUP153. In terms of processing, phosphorylated by host SRPK1, SRPK2, and maybe protein kinase C or GAPDH. Phosphorylation is critical for pregenomic RNA packaging. Protein kinase C phosphorylation is stimulated by HBx protein and may play a role in transport of the viral genome to the nucleus at the late step during the viral replication cycle.

It localises to the virion. It is found in the host cytoplasm. Self assembles to form an icosahedral capsid. Most capsids appear to be large particles with an icosahedral symmetry of T=4 and consist of 240 copies of capsid protein, though a fraction forms smaller T=3 particles consisting of 180 capsid proteins. Entering capsids are transported along microtubules to the nucleus. Phosphorylation of the capsid is thought to induce exposure of nuclear localization signal in the C-terminal portion of the capsid protein that allows binding to the nuclear pore complex via the importin (karyopherin-) alpha and beta. Capsids are imported in intact form through the nuclear pore into the nuclear basket, where it probably binds NUP153. Only capsids that contain the mature viral genome can release the viral DNA and capsid protein into the nucleoplasm. Immature capsids get stuck in the basket. Capsids encapsulate the pre-genomic RNA and the P protein. Pre-genomic RNA is reverse-transcribed into DNA while the capsid is still in the cytoplasm. The capsid can then either be directed to the nucleus, providing more genomes for transcription, or bud through the endoplasmic reticulum to provide new virions. The protein is Capsid protein of Hylobatidae (gibbons).